Here is a 449-residue protein sequence, read N- to C-terminus: Tubulin alpha chain (449 aa).

Gln11 lines the GTP pocket. Lys40 carries the post-translational modification N6-acetyllysine. Glu71, Ser140, Gly144, Thr145, Thr179, Asn206, and Asn228 together coordinate GTP. Residue Glu71 participates in Mg(2+) binding. Residue Glu254 is part of the active site.

It belongs to the tubulin family. As to quaternary structure, dimer of alpha and beta chains. A typical microtubule is a hollow water-filled tube with an outer diameter of 25 nm and an inner diameter of 15 nM. Alpha-beta heterodimers associate head-to-tail to form protofilaments running lengthwise along the microtubule wall with the beta-tubulin subunit facing the microtubule plus end conferring a structural polarity. Microtubules usually have 13 protofilaments but different protofilament numbers can be found in some organisms and specialized cells. Requires Mg(2+) as cofactor. In terms of processing, undergoes a tyrosination/detyrosination cycle, the cyclic removal and re-addition of a C-terminal tyrosine residue by the enzymes tubulin tyrosine carboxypeptidase (TTCP) and tubulin tyrosine ligase (TTL), respectively. Acetylation of alpha chains at Lys-40 stabilizes microtubules and affects affinity and processivity of microtubule motors. This modification has a role in multiple cellular functions, ranging from cell motility, cell cycle progression or cell differentiation to intracellular trafficking and signaling.

It localises to the cytoplasm. Its subcellular location is the cytoskeleton. It catalyses the reaction GTP + H2O = GDP + phosphate + H(+). Its function is as follows. Tubulin is the major constituent of microtubules, a cylinder consisting of laterally associated linear protofilaments composed of alpha- and beta-tubulin heterodimers. Microtubules grow by the addition of GTP-tubulin dimers to the microtubule end, where a stabilizing cap forms. Below the cap, tubulin dimers are in GDP-bound state, owing to GTPase activity of alpha-tubulin. The polypeptide is Tubulin alpha chain (Tetrahymena pyriformis).